Consider the following 177-residue polypeptide: Transcription antitermination protein NusB (177 aa).

Residues 1-36 (MTEQPTKPTGSRPPRQPRTGLTSTGARKAGSKSDRS) are disordered.

This sequence belongs to the NusB family.

In terms of biological role, involved in transcription antitermination. Required for transcription of ribosomal RNA (rRNA) genes. Binds specifically to the boxA antiterminator sequence of the ribosomal RNA (rrn) operons. The chain is Transcription antitermination protein NusB from Albidiferax ferrireducens (strain ATCC BAA-621 / DSM 15236 / T118) (Rhodoferax ferrireducens).